The primary structure comprises 137 residues: Peptide methionine sulfoxide reductase MsrB (137 aa).

Residues alanine 7–glycine 129 form the MsrB domain. 4 residues coordinate Zn(2+): cysteine 46, cysteine 49, cysteine 95, and cysteine 98. Catalysis depends on cysteine 118, which acts as the Nucleophile.

Belongs to the MsrB Met sulfoxide reductase family. It depends on Zn(2+) as a cofactor.

It carries out the reaction L-methionyl-[protein] + [thioredoxin]-disulfide + H2O = L-methionyl-(R)-S-oxide-[protein] + [thioredoxin]-dithiol. The chain is Peptide methionine sulfoxide reductase MsrB from Escherichia coli O45:K1 (strain S88 / ExPEC).